The following is a 474-amino-acid chain: Stabilizer of axonemal microtubules 1 (474 aa).

12 mn regions span residues 30-64, 65-97, 98-131, 132-165, 166-199, 200-232, 233-266, 267-299, 300-332, 333-366, 367-400, and 401-434; these read KPCLLSEYTENYPFYHSYLPRESFKPRREYQKGPI, PMEGLTTSRRDFGPHKVAPVKVHQYDQFVPSEE, NMDLLTTYKKDYNPYPVCRVDPIKPRDSKYPCSD, KMECLPTYKADYLPWNQPRREPLRLEHKYQPASV, RFDNRTTHQDDYPIKGLVKTISCKPLAMPKLCNI, PLEDVTNYKMSYVAHPVEKRFVHEAEKFRPCEI, PFESLTTQKQSYRGLMGEPAKSLKPLARPPGLDM, PFCNTTEFRDKYQAWPMPRMFSKAPITYVPPED, RMDLLTTVQAHYTCPKGAPAQSCRPALQIKKCG, RFEGSSTTKDDYKQWSSMRTEPVKPVPQLDLPTE, PLDCLTTTRAHYVPHLPINTKSCKPHWSGPRGNV, and PVESQTTYTISFTPKEMGRCLASYPEPPGYTFEE. Residues 446-474 are disordered; that stretch reads VSQAGSQQSSHLSVDDSENPNQRELEVLA. Residues 448–457 show a composition bias toward polar residues; sequence QAGSQQSSHL.

Belongs to the FAM154 family. In terms of assembly, associates with microtubules via the Mn regions. As to expression, widely expressed, with highest levels in testis. Expressed in mature spermatozoa (at protein level).

The protein resides in the cytoplasm. Its subcellular location is the cytoskeleton. It localises to the microtubule organizing center. The protein localises to the centrosome. It is found in the centriole. The protein resides in the cilium basal body. Its subcellular location is the cilium axoneme. It localises to the flagellum axoneme. In terms of biological role, may play a role in the regulation of cilium length. Stabilizes microtubules at low temperature. The protein is Stabilizer of axonemal microtubules 1 (SAXO1) of Homo sapiens (Human).